The chain runs to 45 residues: MSKRTFQPNNRRRAKTHGFRLRMRTRAGRAIISTRRAKGRTRLAA.

This sequence belongs to the bacterial ribosomal protein bL34 family.

The polypeptide is Large ribosomal subunit protein bL34 (Salinispora arenicola (strain CNS-205)).